The primary structure comprises 164 residues: Interferon gamma (164 aa).

An N-terminal signal peptide occupies residues 1–19 (MTCQTYNLFVLSVIMIYYG). 2 N-linked (GlcNAc...) asparagine glycosylation sites follow: Asn-42 and Asn-61.

This sequence belongs to the type II (or gamma) interferon family. Homodimer.

Its subcellular location is the secreted. Functionally, produced by lymphocytes activated by specific antigens or mitogens. IFN-gamma, in addition to having antiviral activity, has important immunoregulatory functions. It is a potent activator of macrophages, it has antiproliferative effects on transformed cells and it can potentiate the antiviral and antitumor effects of the type I interferons. The chain is Interferon gamma (IFNG) from Gallus gallus (Chicken).